We begin with the raw amino-acid sequence, 457 residues long: Chromosomal replication initiator protein DnaA (457 aa).

Residues 1–73 (MANNYQTLYD…SKYLSEEFKK (73 aa)) are domain I, interacts with DnaA modulators. Residues 73 to 108 (KENIVNFEFIIDNEKLLINSNFLIKETNIKNRFNFS) form a domain II region. The segment at 109–331 (DELLRYNFNN…GNLKQICFWA (223 aa)) is domain III, AAA+ region. Residues glycine 156, glycine 158, lysine 159, and threonine 160 each coordinate ATP. The segment at 332-457 (DNDTNKDLII…LQINLIINKF (126 aa)) is domain IV, binds dsDNA.

Belongs to the DnaA family. In terms of assembly, oligomerizes as a right-handed, spiral filament on DNA at oriC.

The protein localises to the cytoplasm. Plays an essential role in the initiation and regulation of chromosomal replication. ATP-DnaA binds to the origin of replication (oriC) to initiate formation of the DNA replication initiation complex once per cell cycle. Binds the DnaA box (a 9 base pair repeat at the origin) and separates the double-stranded (ds)DNA. Forms a right-handed helical filament on oriC DNA; dsDNA binds to the exterior of the filament while single-stranded (ss)DNA is stabiized in the filament's interior. The ATP-DnaA-oriC complex binds and stabilizes one strand of the AT-rich DNA unwinding element (DUE), permitting loading of DNA polymerase. After initiation quickly degrades to an ADP-DnaA complex that is not apt for DNA replication. Binds acidic phospholipids. The polypeptide is Chromosomal replication initiator protein DnaA (Ureaplasma parvum serovar 3 (strain ATCC 700970)).